The sequence spans 450 residues: Chromosomal replication initiator protein DnaA (450 aa).

Positions 1 to 84 are domain I, interacts with DnaA modulators; it reads MENIHDLWDR…AVKFIIPPNQ (84 aa). The interval 84-111 is domain II; the sequence is QADEKLELPSSAKKQRKPYEEANDFPQS. Positions 112–328 are domain III, AAA+ region; the sequence is MLNPKYTFDT…GALIRVVAYS (217 aa). Gly156, Gly158, Lys159, and Thr160 together coordinate ATP. The interval 329-450 is domain IV, binds dsDNA; the sequence is SLINKEITAD…KEIQEKLKQL (122 aa).

Belongs to the DnaA family. As to quaternary structure, oligomerizes as a right-handed, spiral filament on DNA at oriC.

The protein resides in the cytoplasm. Its function is as follows. Plays an essential role in the initiation and regulation of chromosomal replication. ATP-DnaA binds to the origin of replication (oriC) to initiate formation of the DNA replication initiation complex once per cell cycle. Binds the DnaA box (a 9 base pair repeat at the origin) and separates the double-stranded (ds)DNA. Forms a right-handed helical filament on oriC DNA; dsDNA binds to the exterior of the filament while single-stranded (ss)DNA is stabiized in the filament's interior. The ATP-DnaA-oriC complex binds and stabilizes one strand of the AT-rich DNA unwinding element (DUE), permitting loading of DNA polymerase. After initiation quickly degrades to an ADP-DnaA complex that is not apt for DNA replication. Binds acidic phospholipids. This chain is Chromosomal replication initiator protein DnaA, found in Geobacillus thermodenitrificans (strain NG80-2).